Consider the following 150-residue polypeptide: MQVLVDADACPAVIKDMLFRAARRAEICVTLVANQFLRTPPSPFIKAVQVPAGFDVADARIVELVEAGDLVITADIPLAAAVLDKGAHALDPRGNWFSRENIEERLSTRAMMDQLRSAGIDTGGPAPFSARDGKAFASQLDRFLARHGKP.

It belongs to the UPF0178 family.

The sequence is that of UPF0178 protein Bcep18194_A4809 from Burkholderia lata (strain ATCC 17760 / DSM 23089 / LMG 22485 / NCIMB 9086 / R18194 / 383).